The following is a 277-amino-acid chain: Putative endonuclease (277 aa).

Putative endonuclease. This chain is Putative endonuclease, found in Escherichia coli (Enterobacteria phage T5).